The sequence spans 424 residues: PDZ and LIM domain protein 7 (424 aa).

The PDZ domain maps to 1–85; it reads MDSFKVVLEG…RLSLSLSRAQ (85 aa). A Phosphoserine modification is found at serine 78. Over residues 81–98 the composition is skewed to polar residues; it reads LSRAQPAQSKPQKVQTPD. The segment at 81-221 is disordered; the sequence is LSRAQPAQSK…HTQPATPTPM (141 aa). Residue threonine 96 is modified to Phosphothreonine. Residues 110–123 show a composition bias toward basic and acidic residues; the sequence is SKQRLMEDTEDWRP. A compositionally biased stretch (pro residues) spans 174–187; it reads EPWPGPTTPSPTSR. The span at 204 to 221 shows a compositional bias: polar residues; sequence KTSTVLTRHTQPATPTPM. LIM zinc-binding domains are found at residues 247–305, 306–365, and 366–424; these read PVCH…VRYA, PSCA…MFGT, and KCRG…FSHV.

Binds via its LIM zinc-binding 3 domain (LIM 3) domain to endocytic codes of INSR, but not with those of IGF1R, LDLR, TFRC, or EGFR. Interacts with various PKC isoforms through the LIM zinc-binding domains. Binds to RET in a phosphorylation-independent manner via its LIM zinc-binding 2 domain (LIM 2). Probably part of a complex with SHC and the RET dimer. Interacts with TPM2, TBX4 and TBX5.

It localises to the cytoplasm. The protein localises to the cytoskeleton. Its function is as follows. May function as a scaffold on which the coordinated assembly of proteins can occur. May play a role as an adapter that, via its PDZ domain, localizes LIM-binding proteins to actin filaments of both skeletal muscle and nonmuscle tissues. Involved in both of the two fundamental mechanisms of bone formation, direct bone formation (e.g. embryonic flat bones mandible and cranium), and endochondral bone formation (e.g. embryonic long bone development). Plays a role during fracture repair. Involved in BMP6 signaling pathway. The polypeptide is PDZ and LIM domain protein 7 (PDLIM7) (Bos taurus (Bovine)).